A 153-amino-acid chain; its full sequence is Arachidonate 5-lipoxygenase-activating protein (153 aa).

At 1–8 the chain is on the lumenal side; that stretch reads MDQETVGN. A helical membrane pass occupies residues 9 to 30; that stretch reads VVLLAIVTLISVIQNGFFAHKV. Residues 31–52 lie on the Cytoplasmic side of the membrane; it reads EHESKTQNGRSFQRTGTLAFER. The chain crosses the membrane as a helical span at residues 53 to 77; it reads VYTANQNCVDAYPTFLVMLWSAGLL. Residues 78 to 80 are Lumenal-facing; it reads CSQ. The chain crosses the membrane as a helical span at residues 81-102; the sequence is VPAAFAGLMYLFVRQKYFVGYL. The Cytoplasmic portion of the chain corresponds to 103–107; it reads GERRQ. The stretch at 108-115 is an intramembrane region; sequence STPGYIFG. The chain crosses the membrane as a helical span at residues 116–128; that stretch reads KRIILFLFLMSLA. Residues 129–153 are Lumenal-facing; that stretch reads GIFNYYLILFFGSDFENYIKTITTT.

The protein belongs to the MAPEG family. In terms of assembly, homotrimer. Interacts with LTC4S and ALOX5.

The protein resides in the nucleus membrane. It localises to the endoplasmic reticulum membrane. In terms of biological role, required for leukotriene biosynthesis by ALOX5 (5-lipoxygenase). Anchors ALOX5 to the membrane. Binds arachidonic acid, and could play an essential role in the transfer of arachidonic acid to ALOX5. Binds to MK-886, a compound that blocks the biosynthesis of leukotrienes. In Equus caballus (Horse), this protein is Arachidonate 5-lipoxygenase-activating protein (ALOX5AP).